An 81-amino-acid polypeptide reads, in one-letter code: Cell division protein ZapB (81 aa).

A coiled-coil region spans residues 5 to 81 (LEVFEKLEAK…QALLGRMEEV (77 aa)). Residue K10 is modified to N6-acetyllysine. The interval 36-67 (NNSLSQEVQNAQHQREELERENNHLKEQQNGW) is disordered. Polar residues predominate over residues 37–47 (NSLSQEVQNAQ). Basic and acidic residues predominate over residues 48–62 (HQREELERENNHLKE).

The protein belongs to the ZapB family. Homodimer. The ends of the coiled-coil dimer bind to each other, forming polymers. Interacts with FtsZ.

The protein resides in the cytoplasm. Its function is as follows. Non-essential, abundant cell division factor that is required for proper Z-ring formation. It is recruited early to the divisome by direct interaction with FtsZ, stimulating Z-ring assembly and thereby promoting cell division earlier in the cell cycle. Its recruitment to the Z-ring requires functional FtsA or ZipA. The chain is Cell division protein ZapB from Shigella boydii serotype 4 (strain Sb227).